Reading from the N-terminus, the 143-residue chain is ATP synthase epsilon chain (143 aa).

Belongs to the ATPase epsilon chain family. In terms of assembly, F-type ATPases have 2 components, CF(1) - the catalytic core - and CF(0) - the membrane proton channel. CF(1) has five subunits: alpha(3), beta(3), gamma(1), delta(1), epsilon(1). CF(0) has three main subunits: a, b and c.

It is found in the cell membrane. Functionally, produces ATP from ADP in the presence of a proton gradient across the membrane. This is ATP synthase epsilon chain from Lacticaseibacillus casei (strain BL23) (Lactobacillus casei).